The primary structure comprises 443 residues: Sperm-associated antigen 4 protein (443 aa).

The span at 1–36 (MRRSPRSGSAASSHNHTPNFYSENSNSSHSATSGDS) shows a compositional bias: low complexity. The segment at 1–107 (MRRSPRSGSA…VRGGASEPSG (107 aa)) is disordered. The next 2 membrane-spanning stretches (helical) occupy residues 137–157 (FLSL…DGLV) and 168–188 (FLFT…WGLL). Residues 203-244 (TLSQYHHRVHSQGQQLQQLQAELNKLHKEVSSVRAAHSERVA) are a coiled coil. The 161-residue stretch at 267-427 (GASIDLEKTS…YRVRAHGVRT (161 aa)) folds into the SUN domain.

In terms of assembly, self-associates. Interacts with ODF1. May associate with microtubules. Interacts with SUN3 and SYNE1; suggesting the formation of a spermatogenesis-specific LINC complex; a SUN domain-based heterotrimer of SPAG4 and SUN3 may associate with SYNE1. Interacts with SEPT12 and LMNB1; during spermatogenesis. Isoform 1 is testis specific and is exclusively expressed in spermatids.

The protein resides in the membrane. The protein localises to the cytoplasm. It localises to the cytoskeleton. It is found in the nucleus envelope. Its subcellular location is the nucleus inner membrane. The protein resides in the flagellum axoneme. Its function is as follows. Involved in spermatogenesis. Required for sperm head formation but not required to establish and maintain general polarity of the sperm head. Required for anchoring and organization of the manchette. Required for targeting of SUN3 and probably SYNE1 through a probable SUN1:SYNE3 LINC complex to the nuclear envelope and involved in accurate posterior sperm head localization of the complex. May anchor SUN3 the nuclear envelope. Involved in maintenance of the nuclear envelope integrity. May assist the organization and assembly of outer dense fibers (ODFs), a specific structure of the sperm tail. The protein is Sperm-associated antigen 4 protein (Spag4) of Mus musculus (Mouse).